The chain runs to 2176 residues: Methyl-CpG-binding domain-containing protein 9 (2176 aa).

The segment covering 1–13 has biased composition (polar residues); the sequence is MEPTDSTNEQLGD. Disordered stretches follow at residues 1–20 and 28–85; these read MEPTDSTNEQLGDTKTAAVK and GIDL…RDAS. A PHD-type 1 zinc finger spans residues 83–133; it reads DASCGACGRPESIELVVVCDACERGFHMSCVNDGVEAAPSADWMCSDCRTG. Residues 86–131 form an RING-type 1; degenerate zinc finger; that stretch reads CGACGRPESIELVVVCDACERGFHMSCVNDGVEAAPSADWMCSDCR. An MBD domain is found at 258–327; sequence RHFISERHGV…MDAEIRNENS (70 aa). Residues 403–456 form the FYR N-terminal domain; that stretch reads GCPMQFEDFFVLSLGRIDIRQSYHNVNVIYPIGYKSCWHDKITGSLFTCEVSDG. Positions 491–511 form a coiled coil; the sequence is EQNSDKLSNRRDSTQERDDDA. One can recognise an FYR C-terminal domain in the interval 550 to 698; sequence SSRVDFDKNL…ESCTNYRTLK (149 aa). 3 short sequence motifs (nuclear localization signal) span residues 914–921, 1124–1131, and 1256–1263; these read SRRGRKKD, KKRTYISV, and YRKLECLS. The stretch at 1098-1137 is one Pumilio repeat; the sequence is PTKKAVLSLLADIRGGDLVQRSIKGTKKRTYISVSDVIMK. A Bromo domain is found at 1130–1245; the sequence is SVSDVIMKKC…EKFKSLYEAE (116 aa). Positions 1251-1273 form a coiled coil; that stretch reads QKLKDYRKLECLSAEMKKEIKDI. Residues 1287 to 1337 form a PHD-type 2 zinc finger; the sequence is EGVCKVCGVDKDDDSVLLCDTCDAEYHTYCLNPPLIRIPDGNWYCPSCVIA. The RING-type 2; degenerate zinc-finger motif lies at 1290–1335; that stretch reads CKVCGVDKDDDSVLLCDTCDAEYHTYCLNPPLIRIPDGNWYCPSCV. A Nuclear localization signal motif is present at residues 1337–1344; it reads AKRMAQEA. Residues 1410 to 1437 are a coiled coil; the sequence is QHLEQCAEAIIEMQQKLRSLSSEWKNAK. 2 disordered regions span residues 1472 to 1553 and 1565 to 1595; these read GCDP…NLPE and GRNHETHSPNSNAVELPTAHDASSQASQELQ. Polar residues-rich tracts occupy residues 1492-1513, 1523-1532, and 1585-1595; these read SSTAYLNKNQGKSPLETDTQPG, KISSPETISS, and DASSQASQELQ. A coiled-coil region spans residues 1588-1628; sequence SQASQELQACQQDLSATSNEIQNLQQSIRSIESQLLKQSIR. The short motif at 1761-1768 is the Nuclear localization signal element; that stretch reads EKRYGPCI. The disordered stretch occupies residues 2136–2176; that stretch reads IDETKPIISLPDQKSQPVSDSQERSSRVRRSGKKRKEPEGS.

As to quaternary structure, interacts with histone H4. In terms of tissue distribution, expressed in leaves, buds, flowers and stems.

The protein localises to the nucleus. The catalysed reaction is L-lysyl-[protein] + acetyl-CoA = N(6)-acetyl-L-lysyl-[protein] + CoA + H(+). Functionally, probable transcriptional regulator that acts as a histone acetyltransferase. Mediates the acetylation of histone H3 and H4 of target loci (e.g. FLC). Involved in an auxin-independent regulation of shoot branching and flowering time. The protein is Methyl-CpG-binding domain-containing protein 9 (MBD9) of Arabidopsis thaliana (Mouse-ear cress).